The chain runs to 60 residues: MDTTFVITPMGMLTITDTLYDDLDISIMDFIGPYIIGNIKTVQIDVRDIKYSDMQKCYFS.

The protein belongs to the chordopoxvirinae A35 protein family.

This Variola virus (isolate Human/India/Ind3/1967) (VARV) protein is Truncated protein A35 homolog (A38R).